The chain runs to 231 residues: MSEIEKVTKTQFDNVYECIFNDGTTRLCTKNLSPGHNVYGERLIKYGGVEYREWNAFRSKLAGAIVKGLKYNPIVKGSKILYLGAASGTTPSHISDIVELQGKVYSVEFSPRVIRELLLVAQYRPNMFPILADARFPQYYKSLVENVDIVYVDIAQPNETEIAMYNARFFLKKNGYMMIAIKSRSIDVTKDPREIYNAEAKKLEDAGFDIREVLELDPYDKDHAMIVVKYK.

Residues 89 to 90 (TT), 108 to 109 (EF), 133 to 134 (DA), and 153 to 156 (DIAQ) each bind S-adenosyl-L-methionine.

The protein belongs to the methyltransferase superfamily. Fibrillarin family. In terms of assembly, interacts with nop5. Component of box C/D small ribonucleoprotein (sRNP) particles that contain rpl7ae, FlpA and nop5, plus a guide RNA.

Involved in pre-rRNA and tRNA processing. Utilizes the methyl donor S-adenosyl-L-methionine to catalyze the site-specific 2'-hydroxyl methylation of ribose moieties in rRNA and tRNA. Site specificity is provided by a guide RNA that base pairs with the substrate. Methylation occurs at a characteristic distance from the sequence involved in base pairing with the guide RNA. The sequence is that of Fibrillarin-like rRNA/tRNA 2'-O-methyltransferase from Sulfolobus acidocaldarius (strain ATCC 33909 / DSM 639 / JCM 8929 / NBRC 15157 / NCIMB 11770).